A 475-amino-acid chain; its full sequence is Ribulose bisphosphate carboxylase large chain (475 aa).

Residues 1–2 constitute a propeptide that is removed on maturation; the sequence is MA. The residue at position 3 (proline 3) is an N-acetylproline. Substrate is bound by residues asparagine 123 and threonine 173. Lysine 175 acts as the Proton acceptor in catalysis. Position 177 (lysine 177) interacts with substrate. Residues lysine 201, aspartate 203, and glutamate 204 each coordinate Mg(2+). Residue lysine 201 is modified to N6-carboxylysine. Catalysis depends on histidine 294, which acts as the Proton acceptor. Substrate-binding residues include arginine 295, histidine 327, and serine 379.

This sequence belongs to the RuBisCO large chain family. Type I subfamily. In terms of assembly, heterohexadecamer of 8 large chains and 8 small chains. Requires Mg(2+) as cofactor.

Its subcellular location is the plastid. The protein localises to the chloroplast. It catalyses the reaction 2 (2R)-3-phosphoglycerate + 2 H(+) = D-ribulose 1,5-bisphosphate + CO2 + H2O. It carries out the reaction D-ribulose 1,5-bisphosphate + O2 = 2-phosphoglycolate + (2R)-3-phosphoglycerate + 2 H(+). In terms of biological role, ruBisCO catalyzes two reactions: the carboxylation of D-ribulose 1,5-bisphosphate, the primary event in carbon dioxide fixation, as well as the oxidative fragmentation of the pentose substrate in the photorespiration process. Both reactions occur simultaneously and in competition at the same active site. This chain is Ribulose bisphosphate carboxylase large chain, found in Ostreococcus tauri.